The sequence spans 126 residues: Small ribosomal subunit protein uS13 (126 aa).

The interval 98–126 is disordered; sequence PLRGQSTKNNARTRKGKKKTVANKKKATK. Residues 108-126 show a composition bias toward basic residues; that stretch reads ARTRKGKKKTVANKKKATK.

It belongs to the universal ribosomal protein uS13 family. In terms of assembly, part of the 30S ribosomal subunit. Forms a loose heterodimer with protein S19. Forms two bridges to the 50S subunit in the 70S ribosome.

Functionally, located at the top of the head of the 30S subunit, it contacts several helices of the 16S rRNA. In the 70S ribosome it contacts the 23S rRNA (bridge B1a) and protein L5 of the 50S subunit (bridge B1b), connecting the 2 subunits; these bridges are implicated in subunit movement. Contacts the tRNAs in the A and P-sites. The polypeptide is Small ribosomal subunit protein uS13 (Parabacteroides distasonis (strain ATCC 8503 / DSM 20701 / CIP 104284 / JCM 5825 / NCTC 11152)).